The following is a 503-amino-acid chain: Methylthioalkylmalate synthase 3, chloroplastic (503 aa).

The N-terminal 51 residues, 1–51 (MASLLLTSSSMITTSCRSMVLRSGLPIGSSFPSLRLTRPYDKATLFVSCCS), are a transit peptide targeting the chloroplast. The Pyruvate carboxyltransferase domain maps to 85-359 (VRVLDTTLRD…YTKIDSRQIM (275 aa)).

The protein belongs to the alpha-IPM synthase/homocitrate synthase family. Mn(2+) is required as a cofactor. In terms of tissue distribution, highly expressed in roots, leaves, and siliques. Lower amounts in stems and flowers.

It is found in the plastid. Its subcellular location is the chloroplast. It carries out the reaction an omega-(methylsulfanyl)-2-oxoalkanoate + acetyl-CoA + H2O = a 2-(omega-methylsulfanyl)alkylmalate + CoA + H(+). With respect to regulation, not activated by ATP. Determines the side chain length of aliphatic glucosinolate structures. Accepts all the omega-methylthio-2-oxoalkanoic acids needed to form the known C3 to C8 glucosinolates. Also able to convert pyruvate to citramalate, 2-oxoisovalerate to isopropylmalate, 4-methyl-2-oxopentanoate and 5-methyl-2-oxohexanoate for Leu-derived glucosinolates, 3-methyl-2-oxopentanoate for Ile-derived glucosinolates and phenylpyruvate to phenylethylglucosinolate. The sequence is that of Methylthioalkylmalate synthase 3, chloroplastic (MAM3) from Arabidopsis thaliana (Mouse-ear cress).